Consider the following 99-residue polypeptide: UPF0235 protein Neut_2146 (99 aa).

Belongs to the UPF0235 family.

The sequence is that of UPF0235 protein Neut_2146 from Nitrosomonas eutropha (strain DSM 101675 / C91 / Nm57).